The sequence spans 274 residues: Putative outer membrane protein CPn_1073/CP_0776/CPj1073/CpB1118 (274 aa).

The N-terminal stretch at Met1–Ala21 is a signal peptide.

Its subcellular location is the cell outer membrane. The polypeptide is Putative outer membrane protein CPn_1073/CP_0776/CPj1073/CpB1118 (Chlamydia pneumoniae (Chlamydophila pneumoniae)).